The primary structure comprises 295 residues: Protein FAM221A (295 aa).

Over residues 272 to 283 (QERLLKEKEQKR) the composition is skewed to basic and acidic residues. The tract at residues 272–295 (QERLLKEKEQKRQKNSKPPTTNRP) is disordered.

Belongs to the FAM221 family.

The protein is Protein FAM221A (fam221a) of Xenopus tropicalis (Western clawed frog).